A 1007-amino-acid polypeptide reads, in one-letter code: Protocadherin alpha-C2 (1007 aa).

A signal peptide spans 1–42 (MEQAGTRPAATEHPRLRRPMPWLLLLPLLLLLLLLLPGPAAS). 5 Cadherin domains span residues 43-148 (QLRY…SPRF), 149-257 (PRPN…SPAF), 258-365 (DQST…APEV), 374-469 (VPEN…PPSF), and 470-579 (LEDS…APHI). The Extracellular segment spans residues 43–708 (QLRYSVPEEQ…RTYSEITLYL (666 aa)). N-linked (GlcNAc...) asparagine glycans are attached at residues N280 and N436. N-linked (GlcNAc...) asparagine glycosylation is found at N586 and N657. The Cadherin 6 domain maps to 594–691 (GPRTAPAGYL…DRVSKILPDT (98 aa)). A helical membrane pass occupies residues 709-729 (IIALSTVSFIFLLTIIILSII). The Cytoplasmic portion of the chain corresponds to 730-1007 (KCYRYTAYGT…GNSTTDNSDQ (278 aa)). PXXP repeat units lie at residues 856–859 (PRQP), 889–892 (PGGP), 930–933 (PGNP), and 948–951 (PGSP). A 4 X 4 AA repeats of P-X-X-P region spans residues 856-951 (PRQPNPDWRY…PDKFIIPGSP (96 aa)). The disordered stretch occupies residues 885–1007 (LRAGPGGPDQ…GNSTTDNSDQ (123 aa)). Residues 966–980 (DKSDFITFGKKEETK) are compositionally biased toward basic and acidic residues.

The protein resides in the cell membrane. Potential calcium-dependent cell-adhesion protein. May be involved in the establishment and maintenance of specific neuronal connections in the brain. The protein is Protocadherin alpha-C2 (PCDHAC2) of Pan troglodytes (Chimpanzee).